The following is a 100-amino-acid chain: uncharacterized protein (100 aa).

The N-terminal stretch at 1-26 is a signal peptide; the sequence is MKRLLVSLRVWMVFLMNWVTPDRKTA.

This is an uncharacterized protein from Bacillus subtilis (strain 168).